The sequence spans 1526 residues: DNA topoisomerase 2-alpha (1526 aa).

At methionine 1 the chain carries N-acetylmethionine. Position 4 is a phosphoserine (serine 4). Residue lysine 17 forms a Glycyl lysine isopeptide (Lys-Gly) (interchain with G-Cter in SUMO2) linkage. ATP contacts are provided by residues asparagine 90, asparagine 118, and 146-148 (SSN). Residues lysine 154 and lysine 155 each participate in a glycyl lysine isopeptide (Lys-Gly) (interchain with G-Cter in SUMO2) cross-link. 159 to 166 (GRNGYGAK) lines the ATP pocket. A Phosphothreonine modification is found at threonine 280. The interval 340 to 342 (KKK) is interaction with DNA. Lysine 350 is covalently cross-linked (Glycyl lysine isopeptide (Lys-Gly) (interchain with G-Cter in SUMO2)). 374-376 (QTK) provides a ligand contact to ATP. Residues lysine 384, lysine 395, lysine 414, lysine 416, lysine 423, and lysine 438 each participate in a glycyl lysine isopeptide (Lys-Gly) (interchain with G-Cter in SUMO2) cross-link. Positions 453 to 570 (CTLILTEGDS…SLLRHRFLEE (118 aa)) constitute a Toprim domain. A Mg(2+)-binding site is contributed by glutamate 459. Residues lysine 464, lysine 478, and lysine 527 each participate in a glycyl lysine isopeptide (Lys-Gly) (interchain with G-Cter in SUMO2) cross-link. Mg(2+) contacts are provided by aspartate 539 and aspartate 541. Glycyl lysine isopeptide (Lys-Gly) (interchain with G-Cter in SUMO2) cross-links involve residues lysine 582, lysine 597, lysine 612, lysine 620, lysine 623, lysine 630, lysine 637, lysine 653, lysine 660, and lysine 674. Residues 713–1168 (IPSMVDGLKP…TPSDLWKEDL (456 aa)) form the Topo IIA-type catalytic domain. Tyrosine 803 functions as the O-(5'-phospho-DNA)-tyrosine intermediate in the catalytic mechanism. The tract at residues 988–997 (KLQTSLTCNS) is interaction with DNA. Lysine 1073 is covalently cross-linked (Glycyl lysine isopeptide (Lys-Gly) (interchain with G-Cter in SUMO2)). Positions 1087 to 1096 (AWKEAQQKVP) are enriched in basic and acidic residues. The interval 1087–1120 (AWKEAQQKVPEEEENEENEESESESTSPAAESGP) is disordered. Acidic residues predominate over residues 1097 to 1109 (EEEENEENEESES). Residues lysine 1193 and lysine 1201 each participate in a glycyl lysine isopeptide (Lys-Gly) (interchain with G-Cter in SUMO2) cross-link. The residue at position 1210 (serine 1210) is a Phosphoserine. The disordered stretch occupies residues 1229–1526 (EKKIRRKIKS…YLEESDDDLF (298 aa)). A Glycyl lysine isopeptide (Lys-Gly) (interchain with G-Cter in SUMO1); alternate cross-link involves residue lysine 1237. A Glycyl lysine isopeptide (Lys-Gly) (interchain with G-Cter in SUMO2); alternate cross-link involves residue lysine 1237. Threonine 1244 is subject to Phosphothreonine. Over residues 1254–1268 (LRQRLEKRQKREPGT) the composition is skewed to basic and acidic residues. Residues lysine 1272, lysine 1279, and lysine 1282 each participate in a glycyl lysine isopeptide (Lys-Gly) (interchain with G-Cter in SUMO2) cross-link. 4 positions are modified to phosphoserine: serine 1291, serine 1293, serine 1295, and serine 1298. The residue at position 1323 (threonine 1323) is a Phosphothreonine. The span at 1326–1346 (LDSDDDFSGLDEKDEDEDFFP) shows a compositional bias: acidic residues. Residues serine 1328 and serine 1333 each carry the phosphoserine modification. Position 1350 is a phosphothreonine (threonine 1350). Residues lysine 1359, lysine 1363, and lysine 1369 each participate in a glycyl lysine isopeptide (Lys-Gly) (interchain with G-Cter in SUMO2) cross-link. Phosphoserine occurs at positions 1370 and 1373. Lysine 1381 is covalently cross-linked (Glycyl lysine isopeptide (Lys-Gly) (interchain with G-Cter in SUMO2)). 2 positions are modified to phosphoserine: serine 1383 and serine 1387. The span at 1417–1427 (TKGQSLTSTAG) shows a compositional bias: polar residues. Residue lysine 1418 forms a Glycyl lysine isopeptide (Lys-Gly) (interchain with G-Cter in SUMO2); alternate linkage. Lysine 1418 carries the post-translational modification N6-acetyllysine; alternate. Residues 1429-1435 (KKRAVPK) form an interaction with PLSCR1 region. A Glycyl lysine isopeptide (Lys-Gly) (interchain with G-Cter in SUMO2); alternate cross-link involves residue lysine 1438. Lysine 1438 bears the N6-acetyllysine; alternate mark. Residues lysine 1450 and lysine 1455 each participate in a glycyl lysine isopeptide (Lys-Gly) (interchain with G-Cter in SUMO2) cross-link. A phosphoserine mark is found at serine 1465, serine 1467, serine 1470, and serine 1472. Glycyl lysine isopeptide (Lys-Gly) (interchain with G-Cter in SUMO2) cross-links involve residues lysine 1480 and lysine 1488. Over residues 1487–1498 (LKGEERDFHVDL) the composition is skewed to basic and acidic residues. The residue at position 1521 (serine 1521) is a Phosphoserine.

This sequence belongs to the type II topoisomerase family. As to quaternary structure, homodimer. Interacts with COPS5. Interacts with RECQL5; this stimulates DNA decatenation. Interacts with SETMAR; stimulates the topoisomerase activity. Interacts with DHX9; this interaction occurs in a E2 enzyme UBE2I- and RNA-dependent manner, negatively regulates DHX9-mediated double-stranded DNA and RNA duplex helicase activity and stimulates TOP2A-mediated supercoiled DNA relaxation activity. Interacts with HNRNPU (via C-terminus); this interaction protects the topoisomerase TOP2A from degradation and positively regulates the relaxation of supercoiled DNA in a RNA-dependent manner. Interacts with MCM3AP. Interacts with ERCC6. Interacts with PLSCR1. Interacts with GCNA; this interaction allows the resolution of topoisomerase II (TOP2A) DNA-protein cross-links. Interacts with POL1RA/RPA1 (via dock II) and UBTF in the context of Pol I complex; may assist Pol I transcription initiation by releasing supercoils occurring during DNA unwinding. Interacts with TPRN; TPRN interacts with a number of DNA damage response proteins, is recruited to sites of DNA damage and may play a role in DNA damage repair. Mg(2+) is required as a cofactor. It depends on Mn(2+) as a cofactor. Requires Ca(2+) as cofactor. Phosphorylation has no effect on catalytic activity.

It is found in the cytoplasm. It localises to the nucleus. The protein resides in the nucleoplasm. The protein localises to the nucleolus. The enzyme catalyses ATP-dependent breakage, passage and rejoining of double-stranded DNA.. Key decatenating enzyme that alters DNA topology by binding to two double-stranded DNA molecules, generating a double-stranded break in one of the strands, passing the intact strand through the broken strand, and religating the broken strand. May play a role in regulating the period length of BMAL1 transcriptional oscillation. In Rattus norvegicus (Rat), this protein is DNA topoisomerase 2-alpha (Top2a).